Here is a 287-residue protein sequence, read N- to C-terminus: ATP synthase gamma chain (287 aa).

The protein belongs to the ATPase gamma chain family. In terms of assembly, F-type ATPases have 2 components, CF(1) - the catalytic core - and CF(0) - the membrane proton channel. CF(1) has five subunits: alpha(3), beta(3), gamma(1), delta(1), epsilon(1). CF(0) has three main subunits: a, b and c.

It is found in the cell membrane. In terms of biological role, produces ATP from ADP in the presence of a proton gradient across the membrane. The gamma chain is believed to be important in regulating ATPase activity and the flow of protons through the CF(0) complex. The sequence is that of ATP synthase gamma chain from Brevibacillus brevis (strain 47 / JCM 6285 / NBRC 100599).